A 218-amino-acid chain; its full sequence is N-(5'-phosphoribosyl)anthranilate isomerase (218 aa).

It belongs to the TrpF family.

It catalyses the reaction N-(5-phospho-beta-D-ribosyl)anthranilate = 1-(2-carboxyphenylamino)-1-deoxy-D-ribulose 5-phosphate. It functions in the pathway amino-acid biosynthesis; L-tryptophan biosynthesis; L-tryptophan from chorismate: step 3/5. This Lachnoclostridium phytofermentans (strain ATCC 700394 / DSM 18823 / ISDg) (Clostridium phytofermentans) protein is N-(5'-phosphoribosyl)anthranilate isomerase.